Here is a 467-residue protein sequence, read N- to C-terminus: Ribosomal protein uS12 methylthiotransferase RimO (467 aa).

Residues 1–110 enclose the MTTase N-terminal domain; sequence MDLHGCAKNQ…LPQLIDSMFP (110 aa). The [4Fe-4S] cluster site is built by C6, C42, C73, C153, C157, and C160. Residues 139 to 386 enclose the Radical SAM core domain; sequence LNFPRSTYIK…QNAQTSITEK (248 aa). Residues 389–467 enclose the TRAM domain; sequence DSFIGKEIEV…NGFDLEAVAV (79 aa).

The protein belongs to the methylthiotransferase family. RimO subfamily. [4Fe-4S] cluster is required as a cofactor.

It is found in the cytoplasm. It carries out the reaction L-aspartate(89)-[ribosomal protein uS12]-hydrogen + (sulfur carrier)-SH + AH2 + 2 S-adenosyl-L-methionine = 3-methylsulfanyl-L-aspartate(89)-[ribosomal protein uS12]-hydrogen + (sulfur carrier)-H + 5'-deoxyadenosine + L-methionine + A + S-adenosyl-L-homocysteine + 2 H(+). Its function is as follows. Catalyzes the methylthiolation of an aspartic acid residue of ribosomal protein uS12. The polypeptide is Ribosomal protein uS12 methylthiotransferase RimO (Treponema denticola (strain ATCC 35405 / DSM 14222 / CIP 103919 / JCM 8153 / KCTC 15104)).